We begin with the raw amino-acid sequence, 92 residues long: Large ribosomal subunit protein bL28 (92 aa).

Belongs to the bacterial ribosomal protein bL28 family.

The polypeptide is Large ribosomal subunit protein bL28 (Borreliella burgdorferi (strain ATCC 35210 / DSM 4680 / CIP 102532 / B31) (Borrelia burgdorferi)).